Consider the following 647-residue polypeptide: Threonine--tRNA ligase (647 aa).

The TGS domain occupies 1–63 (MEVRVEGQMV…PAGCTGIEPV (63 aa)). Residues 244-535 (DHRKLGRELS…LVENFAGALP (292 aa)) form a catalytic region. Zn(2+)-binding residues include cysteine 336, histidine 387, and histidine 512.

This sequence belongs to the class-II aminoacyl-tRNA synthetase family. In terms of assembly, homodimer. Zn(2+) is required as a cofactor.

It localises to the cytoplasm. The enzyme catalyses tRNA(Thr) + L-threonine + ATP = L-threonyl-tRNA(Thr) + AMP + diphosphate + H(+). Functionally, catalyzes the attachment of threonine to tRNA(Thr) in a two-step reaction: L-threonine is first activated by ATP to form Thr-AMP and then transferred to the acceptor end of tRNA(Thr). Also edits incorrectly charged L-seryl-tRNA(Thr). The chain is Threonine--tRNA ligase from Desulfovibrio desulfuricans (strain ATCC 27774 / DSM 6949 / MB).